A 217-amino-acid chain; its full sequence is uncharacterized protein (217 aa).

It to M.tuberculosis Rv2926c.

This is an uncharacterized protein from Mycobacterium leprae (strain TN).